A 20-amino-acid chain; its full sequence is Trypsin inhibitor (20 aa).

A disordered region spans residues 1 to 20 (APSDTTIAETLTITEEFFPD).

As to expression, hemolymph.

The protein resides in the secreted. It is found in the extracellular space. Its function is as follows. Inhibits trypsin stoichiometrically. Also inhibits chymotrypsin very weakly. In Mythimna unipuncta (Armyworm moth), this protein is Trypsin inhibitor.